Here is a 394-residue protein sequence, read N- to C-terminus: Cysteine desulfurase IscS (394 aa).

Pyridoxal 5'-phosphate contacts are provided by residues 72 to 73, Asn152, Gln180, and 200 to 202; these read GT and SAH. The residue at position 203 (Lys203) is an N6-(pyridoxal phosphate)lysine. Thr238 lines the pyridoxal 5'-phosphate pocket. The active-site Cysteine persulfide intermediate is Cys326. Cys326 serves as a coordination point for [2Fe-2S] cluster.

This sequence belongs to the class-V pyridoxal-phosphate-dependent aminotransferase family. NifS/IscS subfamily. As to quaternary structure, homodimer. Forms a heterotetramer with IscU, interacts with other sulfur acceptors. Pyridoxal 5'-phosphate is required as a cofactor.

Its subcellular location is the cytoplasm. The enzyme catalyses (sulfur carrier)-H + L-cysteine = (sulfur carrier)-SH + L-alanine. It participates in cofactor biosynthesis; iron-sulfur cluster biosynthesis. Functionally, master enzyme that delivers sulfur to a number of partners involved in Fe-S cluster assembly, tRNA modification or cofactor biosynthesis. Catalyzes the removal of elemental sulfur atoms from cysteine to produce alanine. Functions as a sulfur delivery protein for Fe-S cluster synthesis onto IscU, an Fe-S scaffold assembly protein, as well as other S acceptor proteins. The sequence is that of Cysteine desulfurase IscS from Dictyoglomus turgidum (strain DSM 6724 / Z-1310).